The primary structure comprises 287 residues: Probable phosphite transport system-binding protein PtxB (287 aa).

A signal peptide spans 1-23 (MKRLSALLLTCLLSAVSSLSALA).

Belongs to the phosphate/phosphite/phosphonate binding protein family.

Its function is as follows. Probably forms part of a binding-protein-dependent phosphite transporter. Required for oxidation of phosphite to phosphate. The chain is Probable phosphite transport system-binding protein PtxB (ptxB) from Stutzerimonas stutzeri (Pseudomonas stutzeri).